A 510-amino-acid chain; its full sequence is D-alanine--D-alanyl carrier protein ligase (510 aa).

ATP is bound at residue 157–158; the sequence is TS. Residue Asp-202 coordinates D-alanine. 297-302 serves as a coordination point for ATP; sequence NTYGPT. A D-alanine-binding site is contributed by Val-306. Asp-389 and Lys-498 together coordinate ATP. Lys-498 provides a ligand contact to D-alanine.

It belongs to the ATP-dependent AMP-binding enzyme family. DltA subfamily.

The protein resides in the cytoplasm. The enzyme catalyses holo-[D-alanyl-carrier protein] + D-alanine + ATP = D-alanyl-[D-alanyl-carrier protein] + AMP + diphosphate. Its pathway is cell wall biogenesis; lipoteichoic acid biosynthesis. Its function is as follows. Catalyzes the first step in the D-alanylation of lipoteichoic acid (LTA), the activation of D-alanine and its transfer onto the D-alanyl carrier protein (Dcp) DltC. In an ATP-dependent two-step reaction, forms a high energy D-alanyl-AMP intermediate, followed by transfer of the D-alanyl residue as a thiol ester to the phosphopantheinyl prosthetic group of the Dcp. D-alanylation of LTA plays an important role in modulating the properties of the cell wall in Gram-positive bacteria, influencing the net charge of the cell wall. This Listeria monocytogenes serotype 4b (strain F2365) protein is D-alanine--D-alanyl carrier protein ligase.